Consider the following 771-residue polypeptide: Probable glycosyltransferase STELLO1 (771 aa).

Residues 1–23 (MLVQDRAAPSPAKPPKSQIRELP) form a disordered region. The Cytoplasmic segment spans residues 1-50 (MLVQDRAAPSPAKPPKSQIRELPTHQQIRRRFSEPKNLDFSTWFSENLSR). The helical transmembrane segment at 51–71 (IAVFSLLIVTIVAFFFLYNTT) threads the bilayer. The Lumenal segment spans residues 72-771 (DTASLLCFQS…EGDPLLMELV (700 aa)). N242 and N729 each carry an N-linked (GlcNAc...) asparagine glycan.

The protein belongs to the STELLO family. In terms of assembly, homo- and heterodimer with STL2. Interacts with CESA1, CESA3, CESA4, CESA6, CESA7 and CESA8, but not with GOT1. In terms of tissue distribution, expressed in cells that are expanding or producing secondary cell walls.

It localises to the golgi apparatus membrane. Probable glycosyltransferase regulating the assembly and trafficking of cellulose synthase complexes. This chain is Probable glycosyltransferase STELLO1, found in Arabidopsis thaliana (Mouse-ear cress).